Here is a 507-residue protein sequence, read N- to C-terminus: Sperm-associated antigen 6 (507 aa).

8 ARM repeats span residues 31 to 70 (PQNI…RLAN), 73 to 112 (DDLA…AVGK), 115 to 154 (PQLA…YIAR), 157 to 196 (TELS…DISK), 199 to 238 (PELA…QIAK), 241 to 280 (VDLA…EIAK), 325 to 365 (ENLA…QLGR), and 402 to 441 (KAIK…KVLP).

In terms of assembly, interacts with SPAG16 and SPAG17. Highly expressed in testis. Not detected in prostate, ovary, spleen, thymus, small intestine, colon and peripheral blood leukocytes.

It is found in the cytoplasm. The protein localises to the cytoskeleton. The protein resides in the cell projection. Its subcellular location is the cilium. It localises to the flagellum. It is found in the cilium axoneme. Important for structural integrity of the central apparatus in the sperm tail and for flagellar motility. The sequence is that of Sperm-associated antigen 6 (Spag6) from Mus musculus (Mouse).